The primary structure comprises 95 residues: uncharacterized protein (95 aa).

Residues 3-23 (FVIIIAILLLGISLILAFTVL) form a helical membrane-spanning segment.

It is found in the membrane. This is an uncharacterized protein from Methanocaldococcus jannaschii (strain ATCC 43067 / DSM 2661 / JAL-1 / JCM 10045 / NBRC 100440) (Methanococcus jannaschii).